A 214-amino-acid chain; its full sequence is Large ribosomal subunit protein bL25 (214 aa).

2 disordered regions span residues 1 to 23 and 182 to 214; these read MSNE…SRRL and DHDQ…ASEE. The span at 200 to 214 shows a compositional bias: acidic residues; sequence DDDDAAEGEEAASEE.

The protein belongs to the bacterial ribosomal protein bL25 family. CTC subfamily. Part of the 50S ribosomal subunit; part of the 5S rRNA/L5/L18/L25 subcomplex. Contacts the 5S rRNA. Binds to the 5S rRNA independently of L5 and L18.

In terms of biological role, this is one of the proteins that binds to the 5S RNA in the ribosome where it forms part of the central protuberance. In Alcanivorax borkumensis (strain ATCC 700651 / DSM 11573 / NCIMB 13689 / SK2), this protein is Large ribosomal subunit protein bL25.